The following is a 796-amino-acid chain: U-box domain-containing protein 51 (796 aa).

Disordered regions lie at residues 163 to 195 (DMDT…SSHQ), 218 to 240 (TNIG…SLDV), and 270 to 292 (RSSQ…SSSQ). The span at 171–181 (ADDRSESRFSS) shows a compositional bias: basic and acidic residues. A compositionally biased stretch (low complexity) spans 182–195 (DSHSGTVSSTSSHQ). Positions 270 to 291 (RSSQMEEASSSSTYSDPTSSSS) are enriched in low complexity. Residues 298-407 (ELEKLKIELR…QRLEDALEGG (110 aa)) adopt a coiled-coil conformation. The Protein kinase domain maps to 429–700 (FSDELKIGVG…DLGKEILPVL (272 aa)). ATP-binding positions include 435–443 (IGVGGYGSV) and lysine 456. Catalysis depends on aspartate 557, which acts as the Proton acceptor. Residues 724-796 (NAPTHFYCPI…IKEWRSQLIK (73 aa)) form the U-box domain.

It belongs to the protein kinase superfamily. Ser/Thr protein kinase family.

The catalysed reaction is L-seryl-[protein] + ATP = O-phospho-L-seryl-[protein] + ADP + H(+). It carries out the reaction L-threonyl-[protein] + ATP = O-phospho-L-threonyl-[protein] + ADP + H(+). It catalyses the reaction S-ubiquitinyl-[E2 ubiquitin-conjugating enzyme]-L-cysteine + [acceptor protein]-L-lysine = [E2 ubiquitin-conjugating enzyme]-L-cysteine + N(6)-ubiquitinyl-[acceptor protein]-L-lysine.. Its pathway is protein modification; protein ubiquitination. Functionally, functions as an E3 ubiquitin ligase. This is U-box domain-containing protein 51 (PUB51) from Arabidopsis thaliana (Mouse-ear cress).